Here is a 241-residue protein sequence, read N- to C-terminus: MISVRRGLSQLWYWGKRGVIGIIALWMAGILIFAFLPVPFSMVMIERQLGAWLTGDFAYVAHSDWVPMDEISPYMALAVMAAEDQKFPDHWGFDVGAIESALSHNQRNQKRIRGASTLSQQTAKNVFLWDGRSWIRKGLEVGLTAGIELIWTKRRILTVYLNIAEFGNGIFGVEAAARHFFNKPASKLSASEAALLAAVLPNPLRFKVNAPSGYVISRQQWILRQMHQLGGKTFLQENTLD.

A helical membrane pass occupies residues 18-38 (GVIGIIALWMAGILIFAFLPV).

This sequence belongs to the glycosyltransferase 51 family.

It localises to the cell inner membrane. The catalysed reaction is [GlcNAc-(1-&gt;4)-Mur2Ac(oyl-L-Ala-gamma-D-Glu-L-Lys-D-Ala-D-Ala)](n)-di-trans,octa-cis-undecaprenyl diphosphate + beta-D-GlcNAc-(1-&gt;4)-Mur2Ac(oyl-L-Ala-gamma-D-Glu-L-Lys-D-Ala-D-Ala)-di-trans,octa-cis-undecaprenyl diphosphate = [GlcNAc-(1-&gt;4)-Mur2Ac(oyl-L-Ala-gamma-D-Glu-L-Lys-D-Ala-D-Ala)](n+1)-di-trans,octa-cis-undecaprenyl diphosphate + di-trans,octa-cis-undecaprenyl diphosphate + H(+). Its pathway is cell wall biogenesis; peptidoglycan biosynthesis. Peptidoglycan polymerase that catalyzes glycan chain elongation from lipid-linked precursors. The protein is Biosynthetic peptidoglycan transglycosylase of Yersinia pseudotuberculosis serotype O:3 (strain YPIII).